The chain runs to 211 residues: Thymidylate kinase (211 aa).

10–17 (GVEGCGKT) is an ATP binding site.

The protein belongs to the thymidylate kinase family.

It catalyses the reaction dTMP + ATP = dTDP + ADP. Phosphorylation of dTMP to form dTDP in both de novo and salvage pathways of dTTP synthesis. In Trichormus variabilis (strain ATCC 29413 / PCC 7937) (Anabaena variabilis), this protein is Thymidylate kinase.